A 242-amino-acid chain; its full sequence is Terpene cyclase dpfgB (242 aa).

7 consecutive transmembrane segments (helical) span residues D15–G37, A51–F71, L75–V95, L112–A132, A141–C161, S169–L189, and L205–W225.

It belongs to the paxB family.

It localises to the membrane. It functions in the pathway secondary metabolite biosynthesis; terpenoid biosynthesis. Functionally, terpene cyclase; part of the gene cluster that mediates the biosynthesis of diterpenoid pyrones. The first step of the pathway is the synthesis of the alpha-pyrone moiety by the polyketide synthase dpfgA via condensation of one acetyl-CoA starter unit with 3 malonyl-CoA units and 2 methylations. The alpha-pyrone is then combined with geranylgeranyl pyrophosphate (GGPP) formed by the GGPP synthase dpfgD through the action of the prenyltransferase dpfgC to yield a linear alpha-pyrone diterpenoid. Subsequent steps in the diterpenoid pyrone biosynthetic pathway involve the decalin core formation, which is initiated by the epoxidation of the C10-C11 olefin by the FAD-dependent oxidoreductase dpfgE, and is followed by a cyclization cascade catalyzed by the terpene cyclase dpfgB. The short chain dehydrogenase/reductase dpfgG then oxidizes the 8S hydroxy group to a ketone and the short chain dehydrogenase/reductase dpfgH reduces the ketone to the 8R hydroxy group to yield higginsianin B. Higginsianin B is further methylated by the methyltransferase dpfgI to produce the intermediate named FDDP B. The cytochrome P450 monooxygenase dfgpJ then catalyzes a three-step oxidation at C-27 to generate a carboxylic acid as well as C-26 hydroxylation. Finally, methyltransferase dpfgK methylates the carboxylic acid generated by dpfgJ, yielding the final diterpenoid pyrones from the pathway which were named FDDP D and FDDP E. The chain is Terpene cyclase dpfgB from Gibberella zeae (strain ATCC MYA-4620 / CBS 123657 / FGSC 9075 / NRRL 31084 / PH-1) (Wheat head blight fungus).